A 126-amino-acid polypeptide reads, in one-letter code: Ribonuclease VapC23 (126 aa).

Positions 2 to 118 (IFVDTNVFMY…GVTRIKTFDH (117 aa)) constitute a PINc domain. Mg(2+)-binding residues include aspartate 5 and aspartate 98.

It belongs to the PINc/VapC protein family. Mg(2+) is required as a cofactor.

Its function is as follows. Toxic component of a type II toxin-antitoxin (TA) system. An RNase. The cognate antitoxin is VapB23. This Mycobacterium tuberculosis (strain CDC 1551 / Oshkosh) protein is Ribonuclease VapC23.